We begin with the raw amino-acid sequence, 405 residues long: Metallophosphoesterase 1 (405 aa).

A helical transmembrane segment spans residues 31–51 (IFGSILLVFFFCEFLVYYLVI). 6 residues coordinate a divalent metal cation: Asp-78, Asp-120, Asn-158, His-261, His-315, and His-317. A helical membrane pass occupies residues 369 to 389 (IIYIYCTASVLLTGYVLACLW).

The protein belongs to the metallophosphoesterase superfamily. MPPE1 family. It depends on Mn(2+) as a cofactor.

The protein resides in the endoplasmic reticulum-Golgi intermediate compartment membrane. Metallophosphoesterase that catalyzes the removal of a side-chain ethanolamine-phosphate (EtNP) from the second mannose of the GPI-anchor protein intermediate. Participates in the glycan remodeling steps of GPI-anchor maturation to allow an efficient transport of GPI-anchor proteins from the endoplasmic reticulum to the Golgi. The chain is Metallophosphoesterase 1 from Xenopus laevis (African clawed frog).